We begin with the raw amino-acid sequence, 822 residues long: Epidermal growth factor receptor kinase substrate 8 (822 aa).

2 stretches are compositionally biased toward polar residues: residues 1–10 (MNGHISNHPS) and 17–30 (SQMN…TFSQ). A disordered region spans residues 1-39 (MNGHISNHPSSFGMYPSQMNGYGSSPTFSQTDREHGSKT). Serine 58 carries the phosphoserine modification. A PTB domain is found at 64-194 (QYRVEHLTTF…SDSKGGKQKR (131 aa)). Disordered stretches follow at residues 202-225 (ISNA…GTVT) and 298-320 (SKRK…TLRA). Residues 208 to 221 (SIPPPPRAPAPAPP) show a composition bias toward pro residues. The residue at position 223 (threonine 223) is a Phosphothreonine. The segment covering 299–309 (KRKKNKKGKRK) has biased composition (basic residues). Phosphothreonine is present on threonine 317. At serine 476 the chain carries Phosphoserine. An SH3 domain is found at 531–590 (QPKKYAKSKYDFVARNNSELSVLKDDILEILDDRKQWWKVRNASGDSGFVPNNILDIVRP). Residues 612–689 (EYGPRPADTP…VDRRKSQMEE (78 aa)) form a disordered region. Residues 618-645 (ADTPPAPSPPPTPAPVPVPLPPSTPAPV) are compositionally biased toward pro residues. Serine 625 bears the Phosphoserine mark. Threonine 629 carries the phosphothreonine; by MAPK modification. The effector region stretch occupies residues 649–822 (KVPANITRQN…VESFDEGSSH (174 aa)). Serine 659, serine 662, and serine 685 each carry phosphoserine. The segment covering 671 to 687 (DSQRHKQLPVDRRKSQM) has biased composition (basic and acidic residues). The segment at 680-698 (VDRRKSQMEEVQDELIHRL) is amphipathic helix. Helix bundle stretches follow at residues 718–738 (VINI…QSKG), 752–757 (GAQLFS), 762–767 (ELRTVC), and 766–785 (VCPE…AALE). A disordered region spans residues 787 to 822 (SSGSSELQEIMRRRQEKISAAASDSGVESFDEGSSH). 2 positions are modified to phosphoserine: serine 811 and serine 815.

The protein belongs to the EPS8 family. Homodimer. Part of a complex consisting of ABI1, EPS8 and SOS1. Interacts with MYO15A and WHRN. Interacts with LANCL1. Interacts with EGFR; mediates EPS8 phosphorylation. Interacts with BAIAP2. Interacts with SHB. Post-translationally, ubiquitinated by the SCF(FBXW5) E3 ubiquitin-protein ligase complex during G2 phase, leading to its transient degradation and subsequent cell shape changes required to allow mitotic progression. Reappears at the midzone of dividing cells. In terms of processing, phosphorylation at Ser-625 and Thr-629 by MAPK following BDNF treatment promotes removal from actin and filopodia formation. Phosphorylated by several receptor tyrosine kinases. In terms of tissue distribution, expressed in all tissues analyzed, including heart, brain, placenta, lung, liver, skeletal muscle, kidney and pancreas. Expressed in all epithelial and fibroblastic lines examined and in some, but not all, hematopoietic cells.

The protein localises to the cytoplasm. The protein resides in the cell cortex. Its subcellular location is the cell projection. It localises to the ruffle membrane. It is found in the growth cone. The protein localises to the stereocilium. The protein resides in the synapse. Its subcellular location is the synaptosome. In terms of biological role, signaling adapter that controls various cellular protrusions by regulating actin cytoskeleton dynamics and architecture. Depending on its association with other signal transducers, can regulate different processes. Together with SOS1 and ABI1, forms a trimeric complex that participates in transduction of signals from Ras to Rac by activating the Rac-specific guanine nucleotide exchange factor (GEF) activity. Acts as a direct regulator of actin dynamics by binding actin filaments and has both barbed-end actin filament capping and actin bundling activities depending on the context. Displays barbed-end actin capping activity when associated with ABI1, thereby regulating actin-based motility process: capping activity is auto-inhibited and inhibition is relieved upon ABI1 interaction. Also shows actin bundling activity when associated with BAIAP2, enhancing BAIAP2-dependent membrane extensions and promoting filopodial protrusions. Involved in the regulation of processes such as axonal filopodia growth, stereocilia length, dendritic cell migration and cancer cell migration and invasion. Acts as a regulator of axonal filopodia formation in neurons: in the absence of neurotrophic factors, negatively regulates axonal filopodia formation via actin-capping activity. In contrast, it is phosphorylated in the presence of BDNF leading to inhibition of its actin-capping activity and stimulation of filopodia formation. Component of a complex with WHRN and MYO15A that localizes at stereocilia tips and is required for elongation of the stereocilia actin core. Indirectly involved in cell cycle progression; its degradation following ubiquitination being required during G2 phase to promote cell shape changes. This Homo sapiens (Human) protein is Epidermal growth factor receptor kinase substrate 8 (EPS8).